Reading from the N-terminus, the 432-residue chain is Enolase (432 aa).

Gln-163 serves as a coordination point for (2R)-2-phosphoglycerate. Glu-205 acts as the Proton donor in catalysis. Mg(2+) contacts are provided by Asp-242, Glu-285, and Asp-312. Positions 337, 366, 367, and 388 each coordinate (2R)-2-phosphoglycerate. Lys-337 serves as the catalytic Proton acceptor.

This sequence belongs to the enolase family. Mg(2+) serves as cofactor.

It is found in the cytoplasm. Its subcellular location is the secreted. The protein resides in the cell surface. It catalyses the reaction (2R)-2-phosphoglycerate = phosphoenolpyruvate + H2O. The protein operates within carbohydrate degradation; glycolysis; pyruvate from D-glyceraldehyde 3-phosphate: step 4/5. In terms of biological role, catalyzes the reversible conversion of 2-phosphoglycerate (2-PG) into phosphoenolpyruvate (PEP). It is essential for the degradation of carbohydrates via glycolysis. The protein is Enolase of Desulfovibrio desulfuricans (strain ATCC 27774 / DSM 6949 / MB).